Reading from the N-terminus, the 642-residue chain is Threonine--tRNA ligase (642 aa).

The TGS domain maps to 1–61; sequence MPVVTLPDGS…DSDANLAIIT (61 aa). The tract at residues 243 to 534 is catalytic; that stretch reads DHRKIGKQLD…LTEEYAGFFP (292 aa). Zn(2+)-binding residues include Cys-334, His-385, and His-511.

This sequence belongs to the class-II aminoacyl-tRNA synthetase family. As to quaternary structure, homodimer. It depends on Zn(2+) as a cofactor.

Its subcellular location is the cytoplasm. The catalysed reaction is tRNA(Thr) + L-threonine + ATP = L-threonyl-tRNA(Thr) + AMP + diphosphate + H(+). Its function is as follows. Catalyzes the attachment of threonine to tRNA(Thr) in a two-step reaction: L-threonine is first activated by ATP to form Thr-AMP and then transferred to the acceptor end of tRNA(Thr). Also edits incorrectly charged L-seryl-tRNA(Thr). This is Threonine--tRNA ligase from Photorhabdus laumondii subsp. laumondii (strain DSM 15139 / CIP 105565 / TT01) (Photorhabdus luminescens subsp. laumondii).